The following is a 590-amino-acid chain: L-fucose isomerase (590 aa).

Active-site proton acceptor residues include Glu337 and Asp361. The Mn(2+) site is built by Glu337, Asp361, and His528.

The protein belongs to the L-fucose isomerase family. The cofactor is Mn(2+).

Its subcellular location is the cytoplasm. The catalysed reaction is L-fucose = L-fuculose. Its pathway is carbohydrate degradation; L-fucose degradation; L-lactaldehyde and glycerone phosphate from L-fucose: step 1/3. Its function is as follows. Converts the aldose L-fucose into the corresponding ketose L-fuculose. This Bacteroides fragilis (strain YCH46) protein is L-fucose isomerase.